The primary structure comprises 182 residues: Acireductone dioxygenase (182 aa).

The Fe(2+) site is built by histidine 100, histidine 102, glutamate 106, and histidine 145. Ni(2+)-binding residues include histidine 100, histidine 102, glutamate 106, and histidine 145.

This sequence belongs to the acireductone dioxygenase (ARD) family. As to quaternary structure, monomer. The cofactor is Fe(2+). Ni(2+) serves as cofactor.

The catalysed reaction is 1,2-dihydroxy-5-(methylsulfanyl)pent-1-en-3-one + O2 = 3-(methylsulfanyl)propanoate + CO + formate + 2 H(+). The enzyme catalyses 1,2-dihydroxy-5-(methylsulfanyl)pent-1-en-3-one + O2 = 4-methylsulfanyl-2-oxobutanoate + formate + 2 H(+). It participates in amino-acid biosynthesis; L-methionine biosynthesis via salvage pathway; L-methionine from S-methyl-5-thio-alpha-D-ribose 1-phosphate: step 5/6. In terms of biological role, catalyzes 2 different reactions between oxygen and the acireductone 1,2-dihydroxy-3-keto-5-methylthiopentene (DHK-MTPene) depending upon the metal bound in the active site. Fe-containing acireductone dioxygenase (Fe-ARD) produces formate and 2-keto-4-methylthiobutyrate (KMTB), the alpha-ketoacid precursor of methionine in the methionine recycle pathway. Ni-containing acireductone dioxygenase (Ni-ARD) produces methylthiopropionate, carbon monoxide and formate, and does not lie on the methionine recycle pathway. This Trichormus variabilis (strain ATCC 29413 / PCC 7937) (Anabaena variabilis) protein is Acireductone dioxygenase.